The primary structure comprises 378 residues: Putative F-box protein At4g17565 (378 aa).

The 48-residue stretch at 16–63 folds into the F-box domain; sequence PKWSELCPDLLRSIFEQLSFTNLNRAKLVCRSWNSASRGCVPKRNQIP.

The sequence is that of Putative F-box protein At4g17565 from Arabidopsis thaliana (Mouse-ear cress).